The primary structure comprises 2531 residues: Neurogenic locus notch homolog protein 1 (2531 aa).

The signal sequence occupies residues 1–18 (MPRLLTPLLCLTLLPALA). At 19 to 1725 (ARGLRCSQPS…VEPPLPSQLH (1707 aa)) the chain is on the extracellular side. EGF-like domains follow at residues 20 to 58 (RGLRCSQPSGTCLNGGRCEVANGTEACVCSGAFVGQRCQ), 59 to 99 (DSNP…PLCL), 102 to 139 (LDNACLANPCRNGGTCDLLTLTEYKCRCPPGWSGKSCQ), and 140 to 176 (QADPCASNPCANGGQCLPFESSYICRCPPGFHGPTCR). Cystine bridges form between Cys24–Cys37, Cys31–Cys46, Cys63–Cys74, Cys68–Cys87, Cys89–Cys98, Cys106–Cys117, Cys111–Cys127, Cys129–Cys138, Cys144–Cys155, Cys149–Cys164, Cys166–Cys175, Cys182–Cys195, Cys189–Cys204, Cys206–Cys215, Cys222–Cys233, Cys227–Cys243, Cys245–Cys254, Cys261–Cys272, Cys266–Cys281, Cys283–Cys292, Cys299–Cys312, Cys306–Cys321, Cys323–Cys332, Cys339–Cys350, Cys344–Cys359, Cys361–Cys370, Cys376–Cys387, Cys381–Cys398, Cys400–Cys409, Cys416–Cys429, Cys423–Cys438, and Cys440–Cys449. Residue Ser65 is glycosylated (O-linked (Glc...) serine). Residue Thr73 is glycosylated (O-linked (Fuc...) threonine). A glycan (O-linked (Fuc...) threonine) is linked at Thr116. The O-linked (Glc...) serine glycan is linked to Ser146. Residues 178 to 216 (DVNECSQNPGLCRHGGTCHNEIGSYRCACRATHTGPHCE) enclose the EGF-like 5; calcium-binding domain. The O-linked (Fuc...) threonine glycan is linked to Thr194. Positions 218-255 (PYVPCSPSPCQNGGTCRPTGDTTHECACLPGFAGQNCE) constitute an EGF-like 6 domain. The O-linked (Fuc...) threonine; alternate glycan is linked to Thr232. A glycan (O-linked (GalNAc...) threonine; alternate) is linked at Thr232. An EGF-like 7; calcium-binding domain is found at 257–293 (NVDDCPGNNCKNGGACVDGVNTYNCRCPPEWTGQYCT). One can recognise an EGF-like 8; calcium-binding domain in the interval 295 to 333 (DVDECQLMPNACQNGGTCHNTHGGYNCVCVNGWTGEDCS). Thr311 carries an O-linked (Fuc...) threonine glycan. The region spanning 335 to 371 (NIDDCASAACFQGATCHDRVASFYCECPHGRTGLLCH) is the EGF-like 9; calcium-binding domain. Ser341 carries an O-linked (Glc...) serine glycan. A glycan (O-linked (Fuc...) threonine) is linked at Thr349. The 39-residue stretch at 372 to 410 (LNDACISNPCNEGSNCDTNPVNGKAICTCPSGYTGPACS) folds into the EGF-like 10; calcium-binding domain. O-linked (Glc...) serine glycosylation is present at Ser378. The 39-residue stretch at 412–450 (DVDECALGANPCEHAGKCLNTLGSFECQCLQGYTGPRCE) folds into the EGF-like 11; calcium-binding domain. Positions 420–421 (AN) are interaction with DLL4. The Ca(2+) site is built by Thr432 and Ser435. A glycan (O-linked (Glc...) serine) is linked at Ser435. Residues 448 to 452 (RCEID) form an interaction with DLL4 region. Ca(2+) contacts are provided by Asp452, Val453, and Glu455. Residues 452–488 (DVNECISNPCQNDATCLDQIGEFQCICMPGYEGVYCE) enclose the EGF-like 12; calcium-binding domain. 3 cysteine pairs are disulfide-bonded: Cys456-Cys467, Cys461-Cys476, and Cys478-Cys487. Ser458 is a glycosylation site (O-linked (Glc...) serine). The O-linked (Fuc...) threonine glycan is linked to Thr466. Residues Asp469 and Gln470 each contribute to the Ca(2+) site. Residues Asn490, Thr491, and Glu493 each contribute to the Ca(2+) site. Positions 490-526 (NTDECASSPCLHNGHCMDKINEFQCQCPKGFNGHLCQ) constitute an EGF-like 13; calcium-binding domain. Cystine bridges form between Cys494-Cys505, Cys499-Cys514, Cys516-Cys525, Cys532-Cys543, Cys537-Cys552, Cys554-Cys563, Cys570-Cys580, Cys575-Cys589, Cys591-Cys600, Cys607-Cys618, Cys612-Cys627, Cys629-Cys638, Cys645-Cys655, Cys650-Cys664, Cys666-Cys675, Cys682-Cys693, Cys687-Cys702, Cys704-Cys713, Cys720-Cys730, Cys725-Cys739, Cys741-Cys750, Cys757-Cys768, Cys762-Cys777, Cys779-Cys788, Cys795-Cys806, Cys800-Cys815, Cys817-Cys826, Cys833-Cys844, Cys838-Cys855, Cys857-Cys866, Cys873-Cys884, Cys878-Cys893, Cys895-Cys904, Cys911-Cys922, Cys916-Cys931, Cys933-Cys942, Cys949-Cys960, Cys954-Cys969, Cys971-Cys980, Cys987-Cys998, Cys992-Cys1007, Cys1009-Cys1018, Cys1025-Cys1036, Cys1030-Cys1045, Cys1047-Cys1056, Cys1063-Cys1074, Cys1068-Cys1083, Cys1085-Cys1094, Cys1101-Cys1122, Cys1116-Cys1131, Cys1133-Cys1142, Cys1149-Cys1160, Cys1154-Cys1169, Cys1171-Cys1180, Cys1187-Cys1198, Cys1192-Cys1207, Cys1209-Cys1218, Cys1225-Cys1244, Cys1238-Cys1253, Cys1255-Cys1264, Cys1271-Cys1284, Cys1276-Cys1293, Cys1295-Cys1304, Cys1311-Cys1322, Cys1316-Cys1334, Cys1336-Cys1345, Cys1352-Cys1363, Cys1357-Cys1372, Cys1374-Cys1383, Cys1391-Cys1403, Cys1397-Cys1414, Cys1416-Cys1425, Cys1449-Cys1472, Cys1454-Cys1467, and Cys1463-Cys1479. An O-linked (Glc...) serine glycan is attached at Ser496. Positions 507 and 508 each coordinate Ca(2+). The region spanning 528–564 (DVDECASTPCKNGAKCLDGPNTYTCVCTEGYTGTHCE) is the EGF-like 14; calcium-binding domain. Residue Ser534 is glycosylated (O-linked (Glc...) serine). Positions 566-601 (DIDECDPDPCHYGSCKDGVATFTCLCQPGYTGHHCE) constitute an EGF-like 15; calcium-binding domain. Residues 603 to 639 (NINECHSQPCRHGGTCQDRDNSYLCLCLKGTTGPNCE) form the EGF-like 16; calcium-binding domain. Ser609 carries O-linked (Glc...) serine glycosylation. O-linked (Fuc...) threonine glycosylation is present at Thr617. Positions 641 to 676 (NLDDCASNPCDSGTCLDKIDGYECACEPGYTGSMCN) constitute an EGF-like 17; calcium-binding domain. Residue Ser647 is glycosylated (O-linked (Glc...) serine). Residues 678–714 (NIDECAGSPCHNGGTCEDGIAGFTCRCPEGYHDPTCL) form the EGF-like 18; calcium-binding domain. Thr692 carries O-linked (Fuc...) threonine glycosylation. The EGF-like 19; calcium-binding domain occupies 716-751 (EVNECNSNPCIHGACRDGLNGYKCDCAPGWSGTNCD). O-linked (Glc...) serine glycosylation occurs at Ser722. The region spanning 753-789 (NNNECESNPCVNGGTCKDMTSGYVCTCREGFSGPNCQ) is the EGF-like 20; calcium-binding domain. An O-linked (Glc...) serine glycan is attached at Ser759. The O-linked (Fuc...) threonine glycan is linked to Thr767. Ser784 carries O-linked (GlcNAc) serine glycosylation. In terms of domain architecture, EGF-like 21; calcium-binding spans 791 to 827 (NINECASNPCLNQGTCIDDVAGYKCNCPLPYTGATCE). Ser797 carries an O-linked (Glc...) serine glycan. The O-linked (Fuc...) threonine glycan is linked to Thr805. The 39-residue stretch at 829-867 (VLAPCATSPCKNSGVCKESEDYESFSCVCPTGWQGQTCE) folds into the EGF-like 22 domain. The 37-residue stretch at 869–905 (DINECVKSPCRHGASCQNTNGSYRCLCQAGYTGRNCE) folds into the EGF-like 23; calcium-binding domain. Asn888 is a glycosylation site (N-linked (GlcNAc...) asparagine). Thr900 carries an O-linked (GlcNAc) threonine glycan. Positions 907-943 (DIDDCRPNPCHNGGSCTDGINTAFCDCLPGFQGAFCE) constitute an EGF-like 24 domain. Ser921 carries O-linked (Fuc) serine glycosylation. The EGF-like 25; calcium-binding domain occupies 945–981 (DINECASNPCQNGANCTDCVDSYTCTCPVGFNGIHCE). Residue Ser951 is glycosylated (O-linked (Glc...) serine). A glycan (N-linked (GlcNAc...) asparagine) is linked at Asn959. The 37-residue stretch at 983–1019 (NTPDCTESSCFNGGTCVDGINSFTCLCPPGFTGSYCQ) folds into the EGF-like 26 domain. Residue Thr997 is glycosylated (O-linked (Fuc...) threonine). The region spanning 1021–1057 (DVNECDSRPCLHGGTCQDSYGTYKCTCPQGYTGLNCQ) is the EGF-like 27; calcium-binding domain. Ser1027 is a glycosylation site (O-linked (Glc...) serine). The O-linked (Fuc...) threonine glycan is linked to Thr1035. EGF-like domains are found at residues 1059–1095 (LVRWCDSAPCKNGGRCWQTNTQYHCECRSGWTGVNCD) and 1097–1143 (LSVS…SYCE). O-linked (Glc...) serine glycosylation is present at Ser1065. The EGF-like 30; calcium-binding domain maps to 1145–1181 (EVDECSPNPCQNGATCTDYLGGFSCKCVAGYHGSNCS). A glycan (O-linked (Fuc...) threonine) is linked at Thr1159. The N-linked (GlcNAc...) asparagine glycan is linked to Asn1179. The EGF-like 31; calcium-binding domain maps to 1183–1219 (EINECLSQPCQNGGTCIDLTNSYKCSCPRGTQGVHCE). Residue Ser1189 is glycosylated (O-linked (Glc...) serine). Thr1197 carries an O-linked (Fuc...) threonine glycan. The EGF-like 32; calcium-binding domain occupies 1221–1265 (NVDDCHPPLDPASRSPKCFNNGTCVDQVGGYTCTCPPGFVGERCE). Asn1241 carries an N-linked (GlcNAc...) asparagine glycan. EGF-like domains are found at residues 1267-1305 (DVNECLSNPCDPRGTQNCVQRVNDFHCECRAGHTGRRCE), 1307-1346 (VINGCRGKPCKNGGVCAVASNTARGFICRCPAGFEGATCE), 1348-1384 (DARTCGSLRCLNGGTCISGPRSPTCLCLGSFTGPECQ), and 1387-1426 (ASSPCVGSNPCYNQGTCEPTSENPFYRCLCPAKFNGLLCH). The O-linked (Glc...) serine glycan is linked to Ser1273. Thr1362 carries an O-linked (Fuc...) threonine glycan. An O-linked (GlcNAc...) threonine glycan is attached at Thr1379. An O-linked (Fuc...) threonine; alternate glycan is attached at Thr1402. A glycan (O-linked (GalNAc...) threonine; alternate) is linked at Thr1402. 3 LNR repeats span residues 1449-1489 (CELP…PWKN), 1490-1531 (CTQS…CNPL), and 1532-1571 (YDQYCKDHFSDGHCDQGCNSAECEWDGLDCAEHVPERLAA). Residues Asp1457, Asn1460, Asp1475, and Asp1478 each contribute to the Ca(2+) site. Residue Asn1489 is glycosylated (N-linked (GlcNAc...) asparagine). 5 cysteine pairs are disulfide-bonded: Cys1490/Cys1514, Cys1496/Cys1509, Cys1505/Cys1521, Cys1536/Cys1549, and Cys1545/Cys1561. Asn1587 carries an N-linked (GlcNAc...) asparagine glycan. An interaction with PSEN1 region spans residues 1718–1750 (PPLPSQLHLMYVAAAAFVLLFFVGCGVLLSRKR). Residues 1726-1746 (LMYVAAAAFVLLFFVGCGVLL) traverse the membrane as a helical segment. Residues 1747–2531 (SRKRRRQHGQ…QITHIPEAFK (785 aa)) are Cytoplasmic-facing. Lys1749 is covalently cross-linked (Glycyl lysine isopeptide (Lys-Gly) (interchain with G-Cter in ubiquitin)). The interval 1770–1798 (KKKRREPLGEDSVGLKPLKNASDGALMDD) is disordered. Residue Thr1851 is modified to Phosphothreonine. 5 ANK repeats span residues 1917-1946 (TGETALHLAARYSRSDAAKRLLEASADANI), 1950-1980 (MGRTPLHAAVSADAQGVFQILLRNRATDLDA), 1984-2013 (DGTTPLILAARLAVEGMLEDLINSHADVNA), 2017-2046 (LGKSALHWAAAVNNVDAAVVLLKNGANKDM), and 2050-2079 (KEETPLFLAAREGSYETAKVLLDHFANRDI). An HIF1AN-binding region spans residues 1937–1945 (LLEASADAN). A (3S)-3-hydroxyasparagine; by HIF1AN; partial modification is found at Asn1945. Residues 2004 to 2012 (LINSHADVN) form an HIF1AN-binding region. Asn2012 is subject to (3S)-3-hydroxyasparagine; by HIF1AN; partial. 3 disordered regions span residues 2140–2185 (KSAT…DSSS), 2382–2428 (QPQN…SLPV), and 2440–2531 (PTSL…EAFK). Residues 2382 to 2395 (QPQNLQPPSQPHLS) are compositionally biased toward low complexity. A compositionally biased stretch (polar residues) spans 2440–2478 (PTSLPSSMVPPMTTTQFLTPPSQHSYSSSPVDNTPSHQL). Low complexity predominate over residues 2488–2503 (PSPESPDQWSSSSPHS). Polar residues predominate over residues 2504 to 2524 (NISDWSEGISSPPTTMPSQIT).

Belongs to the NOTCH family. Heterodimer of a C-terminal fragment N(TM) and an N-terminal fragment N(EC) which are probably linked by disulfide bonds. Interacts with DNER, DTX1, DTX2 and RBPJ/RBPSUH. Also interacts with MAML1, MAML2 and MAML3 which act as transcriptional coactivators for NOTCH1. Notch 1 intracellular domain interacts with SNW1; the interaction involves multimerized NOTCH1 NICD and is implicated in a formation of an intermediate preactivation complex which associates with DNA-bound CBF-1/RBPJ. The activated membrane-bound form interacts with AAK1 which promotes NOTCH1 stabilization. Forms a trimeric complex with FBXW7 and SGK1. Interacts with HIF1AN. HIF1AN negatively regulates the function of notch intracellular domain (NICD), accelerating myogenic differentiation. Interacts (via NICD) with SNAI1 (via zinc fingers); the interaction induces SNAI1 degradation via MDM2-mediated ubiquitination and inhibits SNAI1-induced cell invasion. Interacts (via NICD) with MDM2A. Interacts (via NICD) with BCL6; the interaction decreases MAML1 recruitment by NOTCH1 NICD on target genes DNA and inhibits NOTCH1 transactivation activity. Interacts with THBS4. Interacts (via the EGF-like repeat region) with CCN3 (via CTCK domain). Interacts (via EGF-like domains) with DLL4 (via N-terminal DSL and MNNL domains). Interacts with ZMIZ1. Interacts (via NICD domain) with MEGF10 (via the cytoplasmic domain). Interacts with DLL1 and JAG1. Interacts (via NICD domain) with PRAG1. Forms a complex with PRAG1, N1ICD and MAML1, in a MAML1-dependent manner. Interacts (via transmembrane region) with PSEN1; the interaction is direct. Interacts with ZFP64. Synthesized in the endoplasmic reticulum as an inactive form which is proteolytically cleaved by a furin-like convertase in the trans-Golgi network before it reaches the plasma membrane to yield an active, ligand-accessible form. Cleavage results in a C-terminal fragment N(TM) and a N-terminal fragment N(EC). Following ligand binding, it is cleaved by ADAM17 to yield a membrane-associated intermediate fragment called notch extracellular truncation (NEXT). Following endocytosis, this fragment is then cleaved by one of the catalytic subunits of gamma-secretase (PSEN1 or PSEN2) to release a Notch-derived peptide containing the intracellular domain (NICD) from the membrane. Post-translationally, phosphorylated. In terms of processing, O-linked glycosylation by GALNT11 is involved in determination of left/right symmetry: glycosylation promotes activation of NOTCH1, possibly by promoting cleavage by ADAM17, modulating the balance between motile and immotile (sensory) cilia at the left-right organiser (LRO). O-glycosylated on the EGF-like domains. O-glucosylated at Ser-435 by KDELC1 and KDELC2. Contains both O-linked fucose and O-linked glucose in the EGF-like domains 11, 12 and 13, which are interacting with the residues on DLL4. O-glycosylation at Ser-1027 is only partial. MFNG-, RFNG- and LFNG-mediated modification of O-fucose residues at specific EGF-like domains results in inhibition of its activation by JAG1 and enhancement of its activation by DLL1 via an increased binding to DLL1. Ubiquitinated. Undergoes 'Lys-29'-linked polyubiquitination by ITCH; promotes the lysosomal degradation of non-activated internalized NOTCH1. Deubiquitination by USP12 is required for transport of internalized non-activated receptor from late endosomes to lysosomes for degradation. Monoubiquitination at Lys-1749 is required for activation by gamma-secretase cleavage, it promotes interaction with AAK1, which stabilizes it. Deubiquitination by EIF3F is necessary for nuclear import of activated Notch. Post-translationally, hydroxylated at Asn-1945 and Asn-2012 by HIF1AN. Hydroxylation reduces affinity for HI1AN and may thus indirectly modulate negative regulation of NICD. In terms of tissue distribution, highly expressed in the brain, lung and thymus. Expressed at lower levels in the spleen, bone-marrow, spinal cord, eyes, mammary gland, liver, intestine, skeletal muscle, kidney and heart. In the hair follicle, highly expressed exclusively in the epithelial compartment.

The protein resides in the cell membrane. The protein localises to the late endosome membrane. It localises to the nucleus. In terms of biological role, functions as a receptor for membrane-bound ligands Jagged-1 (JAG1), Jagged-2 (JAG2) and Delta-1 (DLL1) to regulate cell-fate determination. Upon ligand activation through the released notch intracellular domain (NICD) it forms a transcriptional activator complex with RBPJ/RBPSUH and activates genes of the enhancer of split locus. Affects the implementation of differentiation, proliferation and apoptotic programs. Involved in angiogenesis; negatively regulates endothelial cell proliferation and migration and angiogenic sprouting. Involved in the maturation of both CD4(+) and CD8(+) cells in the thymus. Important for follicular differentiation and possibly cell fate selection within the follicle. During cerebellar development, functions as a receptor for neuronal DNER and is involved in the differentiation of Bergmann glia. Represses neuronal and myogenic differentiation. May play an essential role in postimplantation development, probably in some aspect of cell specification and/or differentiation. May be involved in mesoderm development, somite formation and neurogenesis. May enhance HIF1A function by sequestering HIF1AN away from HIF1A. Required for the THBS4 function in regulating protective astrogenesis from the subventricular zone (SVZ) niche after injury. Involved in determination of left/right symmetry by modulating the balance between motile and immotile (sensory) cilia at the left-right organiser (LRO). This is Neurogenic locus notch homolog protein 1 (Notch1) from Mus musculus (Mouse).